The primary structure comprises 116 residues: Methionine-R-sulfoxide reductase B1 (116 aa).

Residues 1–106 (MSFCSFFGGE…FSSSLKFVPK (106 aa)) enclose the MsrB domain. Cysteine 23, cysteine 26, cysteine 71, and cysteine 74 together coordinate Zn(2+). The active-site Nucleophile is the selenocysteine 95. Selenocysteine 95 is a non-standard amino acid (selenocysteine).

The protein belongs to the MsrB Met sulfoxide reductase family. Requires Zn(2+) as cofactor. Post-translationally, truncated MSRB1/SEPX1 proteins produced by failed UGA/Sec decoding are ubiquitinated by the CRL2(FEM1C) E3 ubiquitin-protein ligase complex.

Its subcellular location is the cytoplasm. The protein localises to the nucleus. The protein resides in the cytoskeleton. It catalyses the reaction L-methionyl-[protein] + [thioredoxin]-disulfide + H2O = L-methionyl-(R)-S-oxide-[protein] + [thioredoxin]-dithiol. The catalysed reaction is [thioredoxin]-disulfide + L-methionine + H2O = L-methionine (R)-S-oxide + [thioredoxin]-dithiol. In terms of biological role, methionine-sulfoxide reductase that specifically reduces methionine (R)-sulfoxide back to methionine. While in many cases, methionine oxidation is the result of random oxidation following oxidative stress, methionine oxidation is also a post-translational modification that takes place on specific residue. Acts as a regulator of actin assembly by reducing methionine (R)-sulfoxide mediated by MICALs (MICAL1, MICAL2 or MICAL3) on actin, thereby promoting filament repolymerization. Plays a role in innate immunity by reducing oxidized actin, leading to actin repolymerization in macrophages. This chain is Methionine-R-sulfoxide reductase B1 (MSRB1), found in Pongo abelii (Sumatran orangutan).